The following is a 466-amino-acid chain: SAGFKAGVKDYKLTYYTPDYETKDTDILAAFRVTPQPGVPPEEAGAAVAAESSTGTWTTVWTDGLTNLDRYKGRCYHIEPVAGEETQFIAYVAYPLDLFEEGSVTNMFTSIVGNVFGFKALRALRLEDLRIPVAYVKTFQGPPHGIQVERDKLNKYGRPLLGCTIKPKLGLSAKNYGRAVYECLRGGLDFTKDDENVNSQPFMRWRDRFLFCAEALYKAQAETGEIKGHYLNATAGTCEEMMKRAIFARELGVPIVMHDYLTGGFTANTTLAHYCRDNGLLLHIHRAMHAVIDRQKNHGIHFRVLAKALRMSGGDHIHSGTVVGKLEGEREITLGFVDLLRDDFIEKDRSRGIYFTQDWVSLPGVLPVASGGIHVWHMPALTEIFGDDSVLQFGGGTLGHPWGNAPGAVANRVALEACVQARNEGRXXAREGNEIIREASKWSPELAAACEVWKEIKFEFEAMDTL.

Lys-5 is modified (N6,N6,N6-trimethyllysine). Residues Asn-114 and Thr-164 each coordinate substrate. Lys-166 (proton acceptor) is an active-site residue. Residue Lys-168 coordinates substrate. The Mg(2+) site is built by Lys-192, Asp-194, and Glu-195. The residue at position 192 (Lys-192) is an N6-carboxylysine. Catalysis depends on His-285, which acts as the Proton acceptor. Arg-286, His-318, and Ser-370 together coordinate substrate.

This sequence belongs to the RuBisCO large chain family. Type I subfamily. As to quaternary structure, heterohexadecamer of 8 large chains and 8 small chains; disulfide-linked. The disulfide link is formed within the large subunit homodimers. Requires Mg(2+) as cofactor. In terms of processing, the disulfide bond which can form in the large chain dimeric partners within the hexadecamer appears to be associated with oxidative stress and protein turnover.

It is found in the plastid. It localises to the chloroplast. The catalysed reaction is 2 (2R)-3-phosphoglycerate + 2 H(+) = D-ribulose 1,5-bisphosphate + CO2 + H2O. It carries out the reaction D-ribulose 1,5-bisphosphate + O2 = 2-phosphoglycolate + (2R)-3-phosphoglycerate + 2 H(+). In terms of biological role, ruBisCO catalyzes two reactions: the carboxylation of D-ribulose 1,5-bisphosphate, the primary event in carbon dioxide fixation, as well as the oxidative fragmentation of the pentose substrate in the photorespiration process. Both reactions occur simultaneously and in competition at the same active site. The protein is Ribulose bisphosphate carboxylase large chain of Adoxa moschatellina (Moschatel).